An 863-amino-acid chain; its full sequence is DNA mismatch repair protein MutS (863 aa).

607–614 (GPNMAGKS) lines the ATP pocket.

It belongs to the DNA mismatch repair MutS family.

In terms of biological role, this protein is involved in the repair of mismatches in DNA. It is possible that it carries out the mismatch recognition step. This protein has a weak ATPase activity. This chain is DNA mismatch repair protein MutS, found in Caldicellulosiruptor bescii (strain ATCC BAA-1888 / DSM 6725 / KCTC 15123 / Z-1320) (Anaerocellum thermophilum).